The primary structure comprises 61 residues: Metallothionein-1 (61 aa).

Residue Met-1 is modified to N-acetylmethionine. The beta stretch occupies residues 1 to 29 (MDPNCSCATGVSCTCADSCKCKECKCTSC). 20 residues coordinate a divalent metal cation: Cys-5, Cys-7, Cys-13, Cys-15, Cys-19, Cys-21, Cys-24, Cys-26, Cys-29, Cys-33, Cys-34, Cys-36, Cys-37, Cys-41, Cys-44, Cys-48, Cys-50, Cys-57, Cys-59, and Cys-60. The interval 30–61 (KKSCCSCCPVGCAKCAQGCVCKGASEKCNCCA) is alpha.

The protein belongs to the metallothionein superfamily. Type 1 family.

Metallothioneins have a high content of cysteine residues that bind various heavy metals; these proteins are transcriptionally regulated by both heavy metals and glucocorticoids. This chain is Metallothionein-1 (MT1), found in Chlorocebus aethiops (Green monkey).